We begin with the raw amino-acid sequence, 358 residues long: Phospho-N-acetylmuramoyl-pentapeptide-transferase (358 aa).

10 helical membrane passes run 28–48, 70–90, 92–112, 133–153, 165–185, 196–216, 233–253, 260–280, 285–305, and 335–355; these read AALM…ITWL, TPTM…LLWA, LTNI…AVGF, MGGQ…NPDY, VTFD…VAAS, GLAI…IYIT, VGEV…FLWF, VFMG…LALL, LVLA…IVQV, and KIII…LSVL.

The protein belongs to the glycosyltransferase 4 family. MraY subfamily. Requires Mg(2+) as cofactor.

Its subcellular location is the cell inner membrane. The enzyme catalyses UDP-N-acetyl-alpha-D-muramoyl-L-alanyl-gamma-D-glutamyl-meso-2,6-diaminopimeloyl-D-alanyl-D-alanine + di-trans,octa-cis-undecaprenyl phosphate = di-trans,octa-cis-undecaprenyl diphospho-N-acetyl-alpha-D-muramoyl-L-alanyl-D-glutamyl-meso-2,6-diaminopimeloyl-D-alanyl-D-alanine + UMP. The protein operates within cell wall biogenesis; peptidoglycan biosynthesis. In terms of biological role, catalyzes the initial step of the lipid cycle reactions in the biosynthesis of the cell wall peptidoglycan: transfers peptidoglycan precursor phospho-MurNAc-pentapeptide from UDP-MurNAc-pentapeptide onto the lipid carrier undecaprenyl phosphate, yielding undecaprenyl-pyrophosphoryl-MurNAc-pentapeptide, known as lipid I. This Desulfovibrio desulfuricans (strain ATCC 27774 / DSM 6949 / MB) protein is Phospho-N-acetylmuramoyl-pentapeptide-transferase.